A 179-amino-acid chain; its full sequence is Ribosome maturation factor RimM (179 aa).

The region spanning 96–175 (KDEYFWFDIE…IITVIGAMDI (80 aa)) is the PRC barrel domain.

Belongs to the RimM family. As to quaternary structure, binds ribosomal protein uS19.

It localises to the cytoplasm. An accessory protein needed during the final step in the assembly of 30S ribosomal subunit, possibly for assembly of the head region. Essential for efficient processing of 16S rRNA. May be needed both before and after RbfA during the maturation of 16S rRNA. It has affinity for free ribosomal 30S subunits but not for 70S ribosomes. The polypeptide is Ribosome maturation factor RimM (Sulfurimonas denitrificans (strain ATCC 33889 / DSM 1251) (Thiomicrospira denitrificans (strain ATCC 33889 / DSM 1251))).